The chain runs to 326 residues: Protein TMED8 (326 aa).

Positions 1–99 (MSDRQAAEGP…EGQAPGEQAA (99 aa)) are disordered. Positions 50–65 (SSPLASASDPAAESSP) are enriched in low complexity. The 165-residue stretch at 160–324 (PPCVWTFAKV…NKTLYFHIYY (165 aa)) folds into the GOLD domain. An N6-acetyllysine modification is found at Lys-170. The segment at 234 to 268 (VQVSDSSEDEEEEEDEEEEIEEPVPVGDVERGSRS) is disordered. The segment covering 239-255 (SSEDEEEEEDEEEEIEE) has biased composition (acidic residues).

This chain is Protein TMED8 (Tmed8), found in Mus musculus (Mouse).